The chain runs to 564 residues: Rhodopsin kinase GRK1 (564 aa).

The tract at residues 1 to 15 is interaction with RCVRN; it reads MDFGSLETVVANSAF. Positions 1 to 189 are N-terminal; that stretch reads MDFGSLETVV…LEAQPIGEDW (189 aa). At S5 the chain carries Phosphoserine. T8 carries the post-translational modification Phosphothreonine. The residue at position 21 (S21) is a Phosphoserine; by PKA and autocatalysis. The RGS domain occupies 58 to 175; the sequence is FDNLCSEQPI…LGSLYFLRFL (118 aa). Residues 190–455 form the Protein kinase domain; it reads FLDFRVLGKG…CDALRANVLF (266 aa). Residues 196-204 and K219 contribute to the ATP site; that span reads LGKGGFGEV. D317 serves as the catalytic Proton acceptor. The region spanning 456–521 is the AGC-kinase C-terminal domain; that stretch reads KDISWRQLEA…GNCSIPWQEE (66 aa). Residues 456–564 form a C-terminal region; that stretch reads KDISWRQLEA…TAKSGMCLIS (109 aa). At S491 the chain carries Phosphoserine; by autocatalysis. T492 is modified (phosphothreonine; by autocatalysis). C561 is modified (cysteine methyl ester). C561 carries S-farnesyl cysteine lipidation. Residues 562-564 constitute a propeptide, removed in mature form; sequence LIS.

This sequence belongs to the protein kinase superfamily. AGC Ser/Thr protein kinase family. GPRK subfamily. As to quaternary structure, interacts (via N-terminus) with RCVRN (via C-terminus); the interaction is Ca(2+)-dependent. Interacts (when prenylated) with PDE6D; this promotes release from membranes. May form a complex composed of RHO, GRK1 and RCVRN in a Ca(2+)-dependent manner; RCVRN prevents the interaction between GRK1 and RHO. In terms of processing, autophosphorylated, Ser-21 is a minor site of autophosphorylation compared to Ser-491 and Thr-492. Phosphorylation at Ser-21 is regulated by light and activated by cAMP. Farnesylation is required for full activity. As to expression, detected in retina (at protein level). Retina-specific. Expressed in rod and cone photoreceptor cells.

It localises to the membrane. The protein resides in the cell projection. It is found in the cilium. The protein localises to the photoreceptor outer segment. It catalyses the reaction L-threonyl-[rhodopsin] + ATP = O-phospho-L-threonyl-[rhodopsin] + ADP + H(+). The catalysed reaction is L-seryl-[rhodopsin] + ATP = O-phospho-L-seryl-[rhodopsin] + ADP + H(+). With respect to regulation, inhibited by RCVRN, which prevents the interaction between GRK1 and RHO. Inhibition is calcium-dependent. In terms of biological role, retina-specific kinase involved in the signal turnoff via phosphorylation of rhodopsin (RHO), the G protein- coupled receptor that initiates the phototransduction cascade. This rapid desensitization is essential for scotopic vision and permits rapid adaptation to changes in illumination. May play a role in the maintenance of the outer nuclear layer in the retina. This chain is Rhodopsin kinase GRK1, found in Rattus norvegicus (Rat).